Here is a 481-residue protein sequence, read N- to C-terminus: MSTLCPPPSPAVAKTEIALSGKSPLLAATFAYWDNILGPRVRHIWAPKTEQVLLSDGEITFLANHTLNGEILRNAESGAIDVKFFVLSEKGVIIVSLIFDGNWNGDRSTYGLSIILPQTELSFYLPLHRVCVDRLTHIIRKGRIWMHKERQENVQKIILEGTERMEDQGQSIIPMLTGEVIPVMELLSSMKSHSVPEEIDIADTVLNDDDIGDSCHEGFLLNAISSHLQTCGCSVVVGSSAEKVNKIVRTLCLFLTPAERKCSRLCEAESSFKYESGLFVQGLLKDSTGSFVLPFRQVMYAPYPTTHIDVDVNTVKQMPPCHEHIYNQRRYMRSELTAFWRATSEEDMAQDTIIYTDESFTPDLNIFQDVLHRDTLVKAFLDQVFQLKPGLSLRSTFLAQFLLVLHRKALTLIKYIEDDTQKGKKPFKSLRNLKIDLDLTAEGDLNIIMALAEKIKPGLHSFIFGRPFYTSVQERDVLMTF.

The uDENN C9ORF72-type domain maps to 23–194 (SPLLAATFAY…ELLSSMKSHS (172 aa)). The cDENN C9ORF72-type domain maps to 200-343 (DIADTVLNDD…SELTAFWRAT (144 aa)). One can recognise a dDENN C9ORF72-type domain in the interval 370-464 (VLHRDTLVKA…IKPGLHSFIF (95 aa)). The interval 461–481 (SFIFGRPFYTSVQERDVLMTF) is required for the homodimerization of the C9orf72-SMCR8 complex.

Component of the C9orf72-SMCR8 complex, at least composed of C9orf72, SMCR8 and WDR41. The complex is formed of two protomers, each individually consisting of one molecule each of C9orf72, SMCR8 and WDR41. The protomers homodimerize via an interaction between C9orf72 (via C-terminus) and SMCR8 (via N-terminus). Within each protomer SMCR8 (via DENN domain) acts as a bridging protein between WDR41 (via C-terminus and N-terminus) and C9orf72 (via C-terminus). The C9orf72-SMCR8 complex associates with the ULK1/ATG1 kinase complex. Interacts with ULK1/ATG1 kinase complex members ULK1, ATG13 and RB1CC1. Interacts with SMCR8; the interaction is direct. Interacts with HNRNPA1, HNRNPA2B1 and UBQLN2. Interacts with small Rab GTPase RAB1A; the interaction mediates recruitment of RAB1A to the ULK1/ATG1 kinase complex. Also interacts with small Rab GTPase RAB7A. Interacts with cofilin. Interacts with GTP-binding proteins ARF1 and ARF6. Interacts with the DLG4/PSD-95. Interacts with CARM1 (via PH domain-like fold). Interacts with RAB39A and RAB39B (in GDP-bound forms); functions as GEF for RAB39A and RAB39B. Both isoforms are widely expressed, including kidney, lung, liver, heart, testis and several brain regions, such as cerebellum. Also expressed in the frontal cortex and in lymphoblasts (at protein level).

The protein localises to the cytoplasm. It localises to the nucleus. It is found in the P-body. Its subcellular location is the stress granule. The protein resides in the endosome. The protein localises to the lysosome. It localises to the cytoplasmic vesicle. It is found in the autophagosome. Its subcellular location is the autolysosome. The protein resides in the secreted. The protein localises to the cell projection. It localises to the axon. It is found in the growth cone. Its subcellular location is the perikaryon. The protein resides in the dendrite. The protein localises to the presynapse. It localises to the postsynapse. It is found in the nucleus membrane. Its function is as follows. Acts as a guanine-nucleotide releasing factor (GEF) for Rab GTPases by promoting the conversion of inactive RAB-GDP to the active form RAB-GTP. Acts as a GEF for RAB39A which enables HOPS-mediated autophagosome-lysosome membrane tethering and fusion in mammalian autophagy. Component of the C9orf72-SMCR8 complex where both subunits display GEF activity and that regulates autophagy. As part of the C9orf72-SMCR8-WDR41 (CSW) complex, functions as GEF for RAB8A and RAB39B, thereby promoting autophagosome maturation. As part of the C9orf72-SMCR8 complex, also functions as GTPase activating protein (GAP) for RAB8A and RAB11A in vitro. The C9orf72-SMCR8 complex also acts as a regulator of autophagy initiation by interacting with the ULK1/ATG1 kinase complex and modulating its protein kinase activity. Promotes initiation of autophagy by regulating the RAB1A-dependent trafficking of the ULK1/ATG1 kinase complex to the phagophore which leads to autophagosome formation. Acts as a regulator of mTORC1 signaling by promoting phosphorylation of mTORC1 substrates. Plays a role in endosomal trafficking. May be involved in regulating the maturation of phagosomes to lysosomes. Promotes the lysosomal localization and lysosome-mediated degradation of CARM1 which leads to inhibition of starvation-induced lipid metabolism. Regulates actin dynamics in motor neurons by inhibiting the GTP-binding activity of ARF6, leading to ARF6 inactivation. This reduces the activity of the LIMK1 and LIMK2 kinases which are responsible for phosphorylation and inactivation of cofilin, leading to CFL1/cofilin activation. Positively regulates axon extension and axon growth cone size in spinal motor neurons. Required for SMCR8 protein expression and localization at pre- and post-synaptic compartments in the forebrain, also regulates protein abundance of RAB3A and GRIA1/GLUR1 in post-synaptic compartments in the forebrain and hippocampus. Plays a role within the hematopoietic system in restricting inflammation and the development of autoimmunity. Functionally, regulates stress granule assembly in response to cellular stress. In terms of biological role, does not play a role in regulation of stress granule assembly in response to cellular stress. This chain is Guanine nucleotide exchange factor C9orf72, found in Homo sapiens (Human).